We begin with the raw amino-acid sequence, 364 residues long: Ferrochelatase (364 aa).

2 residues coordinate Fe cation: His211 and Glu292.

It belongs to the ferrochelatase family.

The protein resides in the cytoplasm. The enzyme catalyses heme b + 2 H(+) = protoporphyrin IX + Fe(2+). It functions in the pathway porphyrin-containing compound metabolism; protoheme biosynthesis; protoheme from protoporphyrin-IX: step 1/1. In terms of biological role, catalyzes the ferrous insertion into protoporphyrin IX. This chain is Ferrochelatase, found in Nitrosomonas europaea (strain ATCC 19718 / CIP 103999 / KCTC 2705 / NBRC 14298).